Reading from the N-terminus, the 308-residue chain is D-alanine--D-alanine ligase (308 aa).

Positions 108 to 303 constitute an ATP-grasp domain; sequence KLVWKAAGLP…YEALCLKVLE (196 aa). 134 to 189 contributes to the ATP binding site; that stretch reads EAELGLPMFVKPACEGSSLGVTKVRKAGELAQAYAEARKFDPLVLAEQFVGGGEYT. 3 residues coordinate Mg(2+): aspartate 257, glutamate 270, and asparagine 272.

It belongs to the D-alanine--D-alanine ligase family. It depends on Mg(2+) as a cofactor. Mn(2+) is required as a cofactor.

The protein resides in the cytoplasm. The catalysed reaction is 2 D-alanine + ATP = D-alanyl-D-alanine + ADP + phosphate + H(+). It participates in cell wall biogenesis; peptidoglycan biosynthesis. Cell wall formation. The sequence is that of D-alanine--D-alanine ligase from Laribacter hongkongensis (strain HLHK9).